Reading from the N-terminus, the 21-residue chain is MALNLQDKQAIVAEVSEVAKG.

Belongs to the universal ribosomal protein uL10 family. Part of the ribosomal stalk of the 50S ribosomal subunit. The N-terminus interacts with L11 and the large rRNA to form the base of the stalk. The C-terminus forms an elongated spine to which L12 dimers bind in a sequential fashion forming a multimeric L10(L12)X complex.

Functionally, forms part of the ribosomal stalk, playing a central role in the interaction of the ribosome with GTP-bound translation factors. The sequence is that of Large ribosomal subunit protein uL10 (rplJ) from Proteus vulgaris.